Here is a 595-residue protein sequence, read N- to C-terminus: DNA mismatch repair protein MutL (595 aa).

This sequence belongs to the DNA mismatch repair MutL/HexB family.

Its function is as follows. This protein is involved in the repair of mismatches in DNA. It is required for dam-dependent methyl-directed DNA mismatch repair. May act as a 'molecular matchmaker', a protein that promotes the formation of a stable complex between two or more DNA-binding proteins in an ATP-dependent manner without itself being part of a final effector complex. This Rhodopseudomonas palustris (strain TIE-1) protein is DNA mismatch repair protein MutL.